Here is a 412-residue protein sequence, read N- to C-terminus: Putative pectate lyase 11 (412 aa).

Positions 1 to 24 (MVSYSNNHFAYAFLLLLTIGNTLA) are cleaved as a signal peptide. The Ca(2+) site is built by aspartate 210, aspartate 234, and aspartate 238. Arginine 290 is a catalytic residue.

It belongs to the polysaccharide lyase 1 family. The cofactor is Ca(2+).

It carries out the reaction Eliminative cleavage of (1-&gt;4)-alpha-D-galacturonan to give oligosaccharides with 4-deoxy-alpha-D-galact-4-enuronosyl groups at their non-reducing ends.. It functions in the pathway glycan metabolism; pectin degradation; 2-dehydro-3-deoxy-D-gluconate from pectin: step 2/5. The sequence is that of Putative pectate lyase 11 from Arabidopsis thaliana (Mouse-ear cress).